The chain runs to 891 residues: DNA mismatch repair protein MutS (891 aa).

617 to 624 (GPNMSGKS) is an ATP binding site. Positions 805-827 (REKIEEEEPKTKDTKRGPSEKVK) are enriched in basic and acidic residues. Residues 805 to 840 (REKIEEEEPKTKDTKRGPSEKVKNASPTLPRDEKGR) form a disordered region.

It belongs to the DNA mismatch repair MutS family.

Its function is as follows. This protein is involved in the repair of mismatches in DNA. It is possible that it carries out the mismatch recognition step. This protein has a weak ATPase activity. This is DNA mismatch repair protein MutS from Porphyromonas gingivalis (strain ATCC BAA-308 / W83).